The following is a 419-amino-acid chain: Tol-Pal system protein TolB (419 aa).

The N-terminal stretch at 1-19 (MFNRIISLFLLLFTGQVIA) is a signal peptide.

Belongs to the TolB family. The Tol-Pal system is composed of five core proteins: the inner membrane proteins TolA, TolQ and TolR, the periplasmic protein TolB and the outer membrane protein Pal. They form a network linking the inner and outer membranes and the peptidoglycan layer.

The protein resides in the periplasm. Part of the Tol-Pal system, which plays a role in outer membrane invagination during cell division and is important for maintaining outer membrane integrity. This is Tol-Pal system protein TolB from Legionella pneumophila subsp. pneumophila (strain Philadelphia 1 / ATCC 33152 / DSM 7513).